The primary structure comprises 373 residues: MACSNLTTMWVSSKPSLSADSSSLSFRSVLKCPTNTSSPPSRASSVSPLQASLRELRDRIDSVKNTQKITEAMKLVAAAKVRRAQEAVVNGRPFSETLVEVLYNINEQLQTDDVDVPLTKVRPVKKVALVVVTGDRGLCGGFNNFIIKKAEARIKELKGLGLEYTVISVGKKGNSYFLRRPYIPVDKYLEAGTLPTAKEAQAVADDVFSLFISEEVDKVELLYTKFVSLVKSEPVIHTLLPLSPKGEICDINGTCVDAAEDEFFRLTTKEGKLTVERETFRTPTADFSPILQFEQDPVQILDALLPLYLNSQILRALQESLASELAARMSAMSSASDNASDLKKSLSMVYNRKRQAKITGEILEIVAGANAQV.

A chloroplast-targeting transit peptide spans Met-1–Gln-50. Cys-139 is a catalytic residue. Cys-249 and Cys-255 are disulfide-bonded. Ser-347 bears the Phosphoserine mark.

The protein belongs to the ATPase gamma chain family. F-type ATPases have 2 components, CF(1) - the catalytic core - and CF(0) - the membrane proton channel. CF(1) has five subunits: alpha(3), beta(3), gamma(1), delta(1), epsilon(1). CF(0) has four main subunits: a, b, b' and c. Interacts with PAB.

It is found in the plastid. It localises to the chloroplast thylakoid membrane. Its function is as follows. Produces ATP from ADP in the presence of a proton gradient across the membrane. The gamma chain is believed to be important in regulating ATPase activity and the flow of protons through the CF(0) complex. The chain is ATP synthase gamma chain 1, chloroplastic (ATPC1) from Arabidopsis thaliana (Mouse-ear cress).